A 196-amino-acid chain; its full sequence is RNA polymerase II subunit B1 CTD phosphatase RTR2 (196 aa).

Residues 52-123 (YLARLLSPMS…LSQTPLHERR (72 aa)) form an RTR1-type zinc finger. C75, C80, C99, and H103 together coordinate Zn(2+).

It belongs to the RPAP2 family.

Its subcellular location is the cytoplasm. It localises to the nucleus. It carries out the reaction O-phospho-L-seryl-[protein] + H2O = L-seryl-[protein] + phosphate. The enzyme catalyses O-phospho-L-threonyl-[protein] + H2O = L-threonyl-[protein] + phosphate. Its function is as follows. Probable RNA polymerase II subunit B1 C-terminal domain (CTD) phosphatase that regulates RNA polymerase II transcription. May have functional redundancy with RTR1. The chain is RNA polymerase II subunit B1 CTD phosphatase RTR2 (RTR2) from Saccharomyces cerevisiae (strain ATCC 204508 / S288c) (Baker's yeast).